Consider the following 198-residue polypeptide: Probable GTP-binding protein EngB (198 aa).

Positions 22–195 (DLPEIALAGR…WKAIHKFTKT (174 aa)) constitute an EngB-type G domain. Residues 30 to 37 (GRSNVGKS), 57 to 61 (GKTQT), 75 to 78 (DVPG), 142 to 145 (TKAD), and 174 to 176 (FSS) contribute to the GTP site. Mg(2+) is bound by residues serine 37 and threonine 59.

It belongs to the TRAFAC class TrmE-Era-EngA-EngB-Septin-like GTPase superfamily. EngB GTPase family. Mg(2+) serves as cofactor.

Functionally, necessary for normal cell division and for the maintenance of normal septation. The sequence is that of Probable GTP-binding protein EngB from Bacillus anthracis (strain A0248).